The chain runs to 527 residues: Baicalin-beta-D-glucuronidase (527 aa).

A signal peptide spans 1–25; that stretch reads MGFQVWQKGLCVLCFSLIFICGVIG. Catalysis depends on E212, which acts as the Proton donor. E329 functions as the Nucleophile in the catalytic mechanism.

Belongs to the glycosyl hydrolase 79 family. As to quaternary structure, homotetramer.

The catalysed reaction is baicalin + H2O = baicalein + D-glucuronate + H(+). Functionally, beta-glucuronidase involved in the initiation of H(2)O(2) metabolism via the production of baicalein. Unable to use glycyrrhizin, gypsogenin-3-O-D-glucuronide, luteolin-7-O-D-glucoside and apigenin-7-O-D-glucoside as substrates. This chain is Baicalin-beta-D-glucuronidase (SGUS), found in Scutellaria baicalensis (Baical skullcap).